Consider the following 734-residue polypeptide: Photosystem I P700 chlorophyll a apoprotein A2 (734 aa).

8 helical membrane passes run 46 to 69 (IFASHFGQLAIIFLWTSGNLFHVA), 135 to 158 (LYNGSMFLLFIATLALFAGWLHLE), 175 to 199 (LNHHLSALFGLSSLAWSGHLIHVAI), 273 to 291 (IAHHHLAIAVLFIVAGHMY), 330 to 353 (LHFQLGLALASLGVITSLVAQHMY), 369 to 395 (AALYTHHQYIAGFIMTGAFAHGAIFFI), 417 to 439 (AIISHLSWVTLFLGFHTLGLYVH), and 517 to 535 (FLVHHAIALGLHTTTLILV). Cysteine 559 and cysteine 568 together coordinate [4Fe-4S] cluster. The next 2 membrane-spanning stretches (helical) occupy residues 575–596 (AFYLAVFWMLNTIGWTTFYWHW) and 643–665 (LAVWGWMFLFGHLVWATGFMFLI). Residues histidine 654, methionine 662, and tyrosine 670 each coordinate chlorophyll a. Tryptophan 671 contributes to the phylloquinone binding site. The helical transmembrane segment at 707–727 (LVGLAHFSVGYVFTYAAFLIA) threads the bilayer.

It belongs to the PsaA/PsaB family. In terms of assembly, the PsaA/B heterodimer binds the P700 chlorophyll special pair and subsequent electron acceptors. PSI consists of a core antenna complex that captures photons, and an electron transfer chain that converts photonic excitation into a charge separation. The eukaryotic PSI reaction center is composed of at least 11 subunits. P700 is a chlorophyll a/chlorophyll a' dimer, A0 is one or more chlorophyll a, A1 is one or both phylloquinones and FX is a shared 4Fe-4S iron-sulfur center. is required as a cofactor.

The protein resides in the plastid. Its subcellular location is the chloroplast thylakoid membrane. The catalysed reaction is reduced [plastocyanin] + hnu + oxidized [2Fe-2S]-[ferredoxin] = oxidized [plastocyanin] + reduced [2Fe-2S]-[ferredoxin]. In terms of biological role, psaA and PsaB bind P700, the primary electron donor of photosystem I (PSI), as well as the electron acceptors A0, A1 and FX. PSI is a plastocyanin/cytochrome c6-ferredoxin oxidoreductase, converting photonic excitation into a charge separation, which transfers an electron from the donor P700 chlorophyll pair to the spectroscopically characterized acceptors A0, A1, FX, FA and FB in turn. Oxidized P700 is reduced on the lumenal side of the thylakoid membrane by plastocyanin or cytochrome c6. The chain is Photosystem I P700 chlorophyll a apoprotein A2 from Euglena gracilis.